We begin with the raw amino-acid sequence, 277 residues long: S-formylglutathione hydrolase FrmB (277 aa).

Residues Ser145, Asp221, and His254 each act as charge relay system in the active site.

Belongs to the esterase D family.

It carries out the reaction S-formylglutathione + H2O = formate + glutathione + H(+). Its function is as follows. Serine hydrolase involved in the detoxification of formaldehyde. Hydrolyzes S-formylglutathione to glutathione and formate. The chain is S-formylglutathione hydrolase FrmB (frmB) from Escherichia coli O139:H28 (strain E24377A / ETEC).